A 393-amino-acid chain; its full sequence is NAD(P)H-quinone oxidoreductase subunit H, chloroplastic (393 aa).

The protein belongs to the complex I 49 kDa subunit family. As to quaternary structure, NDH is composed of at least 16 different subunits, 5 of which are encoded in the nucleus.

Its subcellular location is the plastid. The protein resides in the chloroplast thylakoid membrane. The catalysed reaction is a plastoquinone + NADH + (n+1) H(+)(in) = a plastoquinol + NAD(+) + n H(+)(out). It carries out the reaction a plastoquinone + NADPH + (n+1) H(+)(in) = a plastoquinol + NADP(+) + n H(+)(out). Functionally, NDH shuttles electrons from NAD(P)H:plastoquinone, via FMN and iron-sulfur (Fe-S) centers, to quinones in the photosynthetic chain and possibly in a chloroplast respiratory chain. The immediate electron acceptor for the enzyme in this species is believed to be plastoquinone. Couples the redox reaction to proton translocation, and thus conserves the redox energy in a proton gradient. The protein is NAD(P)H-quinone oxidoreductase subunit H, chloroplastic of Crucihimalaya wallichii (Rock-cress).